The chain runs to 171 residues: MSLGSTPSTPENLNPVTRTARQALILQILDKQKVTSQVQLSELLLDEGIDITQATLSRDLDELGARKVRPDGGRAYYAVGPVDSIAREDLRGPSEKLRRMLDELLVSTDHSGNIAMLRTPPGAAQYLASFIDRVGLKEVVGTIAGDDTVFVLARDPLTGKELGELLSGRTT.

It belongs to the ArgR family.

It is found in the cytoplasm. It participates in amino-acid biosynthesis; L-arginine biosynthesis [regulation]. In terms of biological role, regulates arginine biosynthesis genes. The polypeptide is Arginine repressor (argR) (Corynebacterium glutamicum (strain ATCC 13032 / DSM 20300 / JCM 1318 / BCRC 11384 / CCUG 27702 / LMG 3730 / NBRC 12168 / NCIMB 10025 / NRRL B-2784 / 534)).